A 691-amino-acid chain; its full sequence is Elongation factor G (691 aa).

The tr-type G domain maps to 8–282 (NKTRNIGIMA…AVVEFLPAPV (275 aa)). GTP is bound by residues 17–24 (AHIDAGKT), 81–85 (DTPGH), and 135–138 (NKMD).

It belongs to the TRAFAC class translation factor GTPase superfamily. Classic translation factor GTPase family. EF-G/EF-2 subfamily.

The protein localises to the cytoplasm. In terms of biological role, catalyzes the GTP-dependent ribosomal translocation step during translation elongation. During this step, the ribosome changes from the pre-translocational (PRE) to the post-translocational (POST) state as the newly formed A-site-bound peptidyl-tRNA and P-site-bound deacylated tRNA move to the P and E sites, respectively. Catalyzes the coordinated movement of the two tRNA molecules, the mRNA and conformational changes in the ribosome. The polypeptide is Elongation factor G (Heliobacterium modesticaldum (strain ATCC 51547 / Ice1)).